Reading from the N-terminus, the 84-residue chain is MVKLDPSSLGLAIFGCAIGMALAALGCGIGQGLGLKGACEGIARNPEASGKIQVALILGLAFIESLAIYALVINLIILFANPFV.

Helical transmembrane passes span 9–29 (LGLAIFGCAIGMALAALGCGI) and 57–77 (ILGLAFIESLAIYALVINLII).

Belongs to the ATPase C chain family. In terms of assembly, F-type ATPases have 2 components, F(1) - the catalytic core - and F(0) - the membrane proton channel. F(1) has five subunits: alpha(3), beta(3), gamma(1), delta(1), epsilon(1). F(0) has three main subunits: a(1), b(2) and c(10-14). The alpha and beta chains form an alternating ring which encloses part of the gamma chain. F(1) is attached to F(0) by a central stalk formed by the gamma and epsilon chains, while a peripheral stalk is formed by the delta and b chains.

Its subcellular location is the cell membrane. F(1)F(0) ATP synthase produces ATP from ADP in the presence of a proton or sodium gradient. F-type ATPases consist of two structural domains, F(1) containing the extramembraneous catalytic core and F(0) containing the membrane proton channel, linked together by a central stalk and a peripheral stalk. During catalysis, ATP synthesis in the catalytic domain of F(1) is coupled via a rotary mechanism of the central stalk subunits to proton translocation. Its function is as follows. Key component of the F(0) channel; it plays a direct role in translocation across the membrane. A homomeric c-ring of between 10-14 subunits forms the central stalk rotor element with the F(1) delta and epsilon subunits. This Lawsonia intracellularis (strain PHE/MN1-00) protein is ATP synthase subunit c.